Reading from the N-terminus, the 653-residue chain is Testicular spindle-associated protein SHCBP1L (653 aa).

Positions 1–65 are disordered; sequence MASGSKASVP…PVKGKAGRET (65 aa). Residue Ser-8 is modified to Phosphoserine. Over residues 28-41 the composition is skewed to polar residues; sequence SAVSGDTAAATTLK. The span at 46–56 shows a compositional bias: low complexity; it reads PVRSVVASPRP. Phosphoserine is present on Ser-53. A coiled-coil region spans residues 299 to 326; that stretch reads IAQRFKKTLEKYKNKRVELIEYQSNIKE. 4 PbH1 repeats span residues 493–514, 515–537, 538–571, and 574–596; these read SGHM…CVLT, GAAL…ELYP, GSIA…NMKV, and APKL…SILQ. Lys-570 carries the N6-acetyllysine modification. Position 645 is an N6-acetyllysine (Lys-645).

As to quaternary structure, interacts with HSPA2; this interaction may promote the recruitment of HSPA2 to the spindle. As to expression, expressed in spermatocytes and elongating spermatids inside the seminiferous tubules (at protein level). Testis-specific.

Its subcellular location is the cytoplasm. The protein localises to the cytoskeleton. It is found in the spindle. In terms of biological role, testis-specific spindle-associated factor that plays a role in spermatogenesis. In association with HSPA2, participates in the maintenance of spindle integrity during meiosis in male germ cells. In Homo sapiens (Human), this protein is Testicular spindle-associated protein SHCBP1L.